Consider the following 280-residue polypeptide: uncharacterized protein (280 aa).

This is an uncharacterized protein from Aedes vexans (Inland floodwater mosquito).